The chain runs to 231 residues: Sugar fermentation stimulation protein homolog (231 aa).

Belongs to the SfsA family.

This is Sugar fermentation stimulation protein homolog from Geobacter sp. (strain M21).